Here is a 596-residue protein sequence, read N- to C-terminus: uncharacterized protein (596 aa).

A helical transmembrane segment spans residues 7–26; it reads FWPILLGFTVLVAAGLYYVV.

Its subcellular location is the membrane. This is an uncharacterized protein from Sinorhizobium fredii (strain NBRC 101917 / NGR234).